The sequence spans 198 residues: NADH-quinone oxidoreductase subunit B 1 (198 aa).

Residues cysteine 77, cysteine 78, cysteine 142, and cysteine 172 each contribute to the [4Fe-4S] cluster site.

Belongs to the complex I 20 kDa subunit family. As to quaternary structure, NDH-1 is composed of 14 different subunits. Subunits NuoB, C, D, E, F, and G constitute the peripheral sector of the complex. [4Fe-4S] cluster serves as cofactor.

The protein localises to the cell inner membrane. It carries out the reaction a quinone + NADH + 5 H(+)(in) = a quinol + NAD(+) + 4 H(+)(out). NDH-1 shuttles electrons from NADH, via FMN and iron-sulfur (Fe-S) centers, to quinones in the respiratory chain. The immediate electron acceptor for the enzyme in this species is believed to be ubiquinone. Couples the redox reaction to proton translocation (for every two electrons transferred, four hydrogen ions are translocated across the cytoplasmic membrane), and thus conserves the redox energy in a proton gradient. In Rhodopseudomonas palustris (strain ATCC BAA-98 / CGA009), this protein is NADH-quinone oxidoreductase subunit B 1.